Reading from the N-terminus, the 380-residue chain is 8-amino-7-oxononanoate synthase (380 aa).

Arginine 26 serves as a coordination point for substrate. 104 to 105 (GY) provides a ligand contact to pyridoxal 5'-phosphate. Histidine 129 is a substrate binding site. Residues serine 175, 200–203 (DEAH), and 232–235 (TLSK) contribute to the pyridoxal 5'-phosphate site. Lysine 235 carries the post-translational modification N6-(pyridoxal phosphate)lysine. Threonine 345 contacts substrate.

This sequence belongs to the class-II pyridoxal-phosphate-dependent aminotransferase family. BioF subfamily. In terms of assembly, homodimer. The cofactor is pyridoxal 5'-phosphate.

The enzyme catalyses 6-carboxyhexanoyl-[ACP] + L-alanine + H(+) = (8S)-8-amino-7-oxononanoate + holo-[ACP] + CO2. Its pathway is cofactor biosynthesis; biotin biosynthesis. In terms of biological role, catalyzes the decarboxylative condensation of pimeloyl-[acyl-carrier protein] and L-alanine to produce 8-amino-7-oxononanoate (AON), [acyl-carrier protein], and carbon dioxide. This chain is 8-amino-7-oxononanoate synthase, found in Mycolicibacterium vanbaalenii (strain DSM 7251 / JCM 13017 / BCRC 16820 / KCTC 9966 / NRRL B-24157 / PYR-1) (Mycobacterium vanbaalenii).